The chain runs to 36 residues: Dermonecrotic toxin LgSicTox-beta-LOXN2 (36 aa).

The protein belongs to the arthropod phospholipase D family. Class II subfamily. It depends on Mg(2+) as a cofactor. Contains 2 disulfide bonds. As to expression, expressed by the venom gland.

It is found in the secreted. The enzyme catalyses an N-(acyl)-sphingosylphosphocholine = an N-(acyl)-sphingosyl-1,3-cyclic phosphate + choline. The catalysed reaction is an N-(acyl)-sphingosylphosphoethanolamine = an N-(acyl)-sphingosyl-1,3-cyclic phosphate + ethanolamine. It catalyses the reaction a 1-acyl-sn-glycero-3-phosphocholine = a 1-acyl-sn-glycero-2,3-cyclic phosphate + choline. It carries out the reaction a 1-acyl-sn-glycero-3-phosphoethanolamine = a 1-acyl-sn-glycero-2,3-cyclic phosphate + ethanolamine. Functionally, dermonecrotic toxins cleave the phosphodiester linkage between the phosphate and headgroup of certain phospholipids (sphingolipid and lysolipid substrates), forming an alcohol (often choline) and a cyclic phosphate. This toxin acts on sphingomyelin (SM). It may also act on ceramide phosphoethanolamine (CPE), lysophosphatidylcholine (LPC) and lysophosphatidylethanolamine (LPE), but not on lysophosphatidylserine (LPS), and lysophosphatidylglycerol (LPG). It acts by transphosphatidylation, releasing exclusively cyclic phosphate products as second products. Induces dermonecrosis, hemolysis, increased vascular permeability, edema, inflammatory response, and platelet aggregation. The polypeptide is Dermonecrotic toxin LgSicTox-beta-LOXN2 (Loxosceles gaucho (Spider)).